Here is a 337-residue protein sequence, read N- to C-terminus: 4-hydroxythreonine-4-phosphate dehydrogenase (337 aa).

Substrate is bound by residues H138 and T139. Residues H168, H212, and H267 each coordinate a divalent metal cation. The substrate site is built by K275, N284, and R293.

This sequence belongs to the PdxA family. Homodimer. The cofactor is Zn(2+). Mg(2+) is required as a cofactor. Co(2+) serves as cofactor.

It is found in the cytoplasm. The enzyme catalyses 4-(phosphooxy)-L-threonine + NAD(+) = 3-amino-2-oxopropyl phosphate + CO2 + NADH. It participates in cofactor biosynthesis; pyridoxine 5'-phosphate biosynthesis; pyridoxine 5'-phosphate from D-erythrose 4-phosphate: step 4/5. Catalyzes the NAD(P)-dependent oxidation of 4-(phosphooxy)-L-threonine (HTP) into 2-amino-3-oxo-4-(phosphooxy)butyric acid which spontaneously decarboxylates to form 3-amino-2-oxopropyl phosphate (AHAP). This chain is 4-hydroxythreonine-4-phosphate dehydrogenase, found in Beijerinckia indica subsp. indica (strain ATCC 9039 / DSM 1715 / NCIMB 8712).